A 589-amino-acid polypeptide reads, in one-letter code: Guanylate-binding protein 1 (589 aa).

The interval 1–309 (MASEIHMSEP…SAICSGELPC (309 aa)) is GTPase domain (Globular). The GB1/RHD3-type G domain occupies 35 to 276 (TQPVVVVAIV…FTSYIFSYSG (242 aa)). GTP is bound by residues 47 to 53 (YRTGKSY), 67 to 69 (LGS), and 97 to 101 (DTEGL). A Phosphoserine modification is found at S156. A Cysteine methyl ester modification is found at C586. Residue C586 is the site of S-farnesyl cysteine attachment. A lipid anchor (S-geranylgeranyl cysteine; partial) is attached at C586. The residue at position 587 (T587) is a Phosphothreonine. The propeptide at 587 to 589 (TIL) is removed in mature form.

It belongs to the TRAFAC class dynamin-like GTPase superfamily. GB1/RHD3 GTPase family. GB1 subfamily. In terms of assembly, homodimer; homodimerization occurs upon GTP-binding and is required for the second hydrolysis step from GDP to GMP. Undergoes conformational changes and oligomerization upon GTP-binding and hydrolysis. Heterodimer with other family members, including GBP2, GBP3, GBP4 and GBP5. Dimerization regulates subcellular location to membranous structures. Interacts with SQSTM1. Interacts (when phosphorylated) with 14-3-3 protein sigma (SFN); leading to GBP1 retention in the cytosol and inactivation. Isoprenylation of mouse GBP1 is incomplete. It persistently exists in the cell as a mixture of C20-modified and (more predominantly) unmodified form. Isoprenylation is required for proper subcellular location. Post-translationally, phosphorylated at Ser-156 by PIM1 in absence of infection, inhibits GBP1: phosphorylation promotes interaction with 14-3-3 protein sigma (SFN), leading to GBP1 retention in the cytosol. Dephosphorylated in response to infection, liberating GBP1.

It is found in the cytoplasmic vesicle membrane. Its subcellular location is the golgi apparatus membrane. The protein localises to the cell membrane. It localises to the cytoplasm. The protein resides in the cytosol. It is found in the secreted. It carries out the reaction GTP + H2O = GDP + phosphate + H(+). It catalyses the reaction GDP + H2O = GMP + phosphate + H(+). Functionally, interferon (IFN)-inducible GTPase that plays important roles in innate immunity against a diverse range of bacterial, viral and protozoan pathogens. Hydrolyzes GTP to GMP in two consecutive cleavage reactions: GTP is first hydrolyzed to GDP and then to GMP in a processive manner. Following infection, recruited to the pathogen-containing vacuoles or vacuole-escaped bacteria and promotes both inflammasome assembly and autophagy. Acts as a positive regulator of inflammasome assembly by facilitating the detection of inflammasome ligands from pathogens. Involved in the lysis of pathogen-containing vacuoles, releasing pathogens into the cytosol. Following pathogen release in the cytosol, forms a protein coat in a GTPase-dependent manner that encapsulates pathogens and promotes the detection of ligands by pattern recognition receptors. Plays a key role in inflammasome assembly in response to infection by Gram-negative bacteria: following pathogen release in the cytosol, forms a protein coat that encapsulates Gram-negative bacteria and directly binds to lipopolysaccharide (LPS), disrupting the O-antigen barrier and unmasking lipid A that is that detected by the non-canonical inflammasome effector CASP4/CASP11. Also promotes recruitment of proteins that mediate bacterial cytolysis, leading to release double-stranded DNA (dsDNA) that activates the AIM2 inflammasome. Involved in autophagy by regulating bacteriolytic peptide generation via its interaction with ubiquitin-binding protein SQSTM1, which delivers monoubiquitinated proteins to autolysosomes for the generation of bacteriolytic peptides. Confers protection to several pathogens, including the bacterial pathogens L.monocytogenes and M.bovis BCG as well as the protozoan pathogen T.gondii. Exhibits antiviral activity against influenza virus. In Mus musculus (Mouse), this protein is Guanylate-binding protein 1 (Gbp1).